Reading from the N-terminus, the 283-residue chain is Pantothenate synthetase (283 aa).

30 to 37 is an ATP binding site; the sequence is MGYYHSGH. Catalysis depends on histidine 37, which acts as the Proton donor. Glutamine 61 is a binding site for (R)-pantoate. Glutamine 61 contacts beta-alanine. 147–150 serves as a coordination point for ATP; the sequence is GQKD. Position 153 (glutamine 153) interacts with (R)-pantoate. Residues valine 176 and 184–187 each bind ATP; that span reads MSSR.

It belongs to the pantothenate synthetase family. As to quaternary structure, homodimer.

Its subcellular location is the cytoplasm. The catalysed reaction is (R)-pantoate + beta-alanine + ATP = (R)-pantothenate + AMP + diphosphate + H(+). It participates in cofactor biosynthesis; (R)-pantothenate biosynthesis; (R)-pantothenate from (R)-pantoate and beta-alanine: step 1/1. In terms of biological role, catalyzes the condensation of pantoate with beta-alanine in an ATP-dependent reaction via a pantoyl-adenylate intermediate. The protein is Pantothenate synthetase of Nitratidesulfovibrio vulgaris (strain DSM 19637 / Miyazaki F) (Desulfovibrio vulgaris).